A 388-amino-acid chain; its full sequence is Phosphopentomutase (388 aa).

Residues aspartate 9, aspartate 283, histidine 288, aspartate 324, histidine 325, and histidine 336 each contribute to the Mn(2+) site.

This sequence belongs to the phosphopentomutase family. The cofactor is Mn(2+).

It localises to the cytoplasm. The catalysed reaction is 2-deoxy-alpha-D-ribose 1-phosphate = 2-deoxy-D-ribose 5-phosphate. The enzyme catalyses alpha-D-ribose 1-phosphate = D-ribose 5-phosphate. Its pathway is carbohydrate degradation; 2-deoxy-D-ribose 1-phosphate degradation; D-glyceraldehyde 3-phosphate and acetaldehyde from 2-deoxy-alpha-D-ribose 1-phosphate: step 1/2. Functionally, isomerase that catalyzes the conversion of deoxy-ribose 1-phosphate (dRib-1-P) and ribose 1-phosphate (Rib-1-P) to deoxy-ribose 5-phosphate (dRib-5-P) and ribose 5-phosphate (Rib-5-P), respectively. In Deinococcus radiodurans (strain ATCC 13939 / DSM 20539 / JCM 16871 / CCUG 27074 / LMG 4051 / NBRC 15346 / NCIMB 9279 / VKM B-1422 / R1), this protein is Phosphopentomutase.